The sequence spans 449 residues: Protein adenylyltransferase FICD (449 aa).

The helical transmembrane segment at 15 to 35 threads the bilayer; sequence LLWGWGPILFGLLGSVFVLLL. 2 TPR repeats span residues 96 to 129 and 130 to 163; these read AKAA…NPEF and VEAL…SPCH. An Inhibitory (S/T)XXXE(G/N) motif motif is present at residues 220-225; sequence TVAIEG. Residues glutamate 224, 250 to 251, 358 to 360, and arginine 364 contribute to the ATP site; these read EQ and GNG. The Fido domain occupies 275–410; the sequence is ITVNDILEIH…VRPFIRFIAK (136 aa).

The protein belongs to the fic family.

The protein resides in the membrane. It carries out the reaction L-tyrosyl-[protein] + ATP = O-(5'-adenylyl)-L-tyrosyl-[protein] + diphosphate. The catalysed reaction is L-threonyl-[protein] + ATP = 3-O-(5'-adenylyl)-L-threonyl-[protein] + diphosphate. Its activity is regulated as follows. Adenylyltransferase activity is inhibited by the inhibitory helix present at the N-terminus: Glu-224 binds ATP and competes with ATP-binding at Arg-364, thereby preventing adenylyltransferase activity. Activation dissociates ATP-binding from Glu-224, allowing ordered binding of the entire ATP moiety with the alpha-phosphate in an orientation that is productive for accepting an incoming target hydroxyl side chain. Functionally, adenylyltransferase that mediates the addition of adenosine 5'-monophosphate (AMP) to specific residues of target proteins. The chain is Protein adenylyltransferase FICD (ficd) from Danio rerio (Zebrafish).